A 141-amino-acid chain; its full sequence is Sporulation-specific cell division protein SsgB (141 aa).

Belongs to the SsgA family. Interacts with SsgA. Interacts with FtsZ (via N-terminus).

It localises to the cell septum. Involved in sporulation-specific cell division. Required for early stages of sporulation. Important in the process of growth cessation prior to sporulation-specific cell division. Recruits cell division protein FtsZ to the future septum sites and tethers the contractile ring structure (Z ring) to the cytoplasmic membrane during sporulation. Stimulates polymerization and filament length of FtsZ in vitro. This Saccharopolyspora erythraea (strain ATCC 11635 / DSM 40517 / JCM 4748 / NBRC 13426 / NCIMB 8594 / NRRL 2338) protein is Sporulation-specific cell division protein SsgB.